Reading from the N-terminus, the 138-residue chain is Acidic phospholipase A2 (138 aa).

The N-terminal stretch at 1–16 (MRTLWIVAVLLLGVEG) is a signal peptide. Disulfide bonds link C42-C131, C44-C60, C59-C111, C65-C138, C66-C104, C73-C97, and C91-C102. Y43, G45, and G47 together coordinate Ca(2+). H63 is an active-site residue. A Ca(2+)-binding site is contributed by D64. D105 is an active-site residue.

The protein belongs to the phospholipase A2 family. Group II subfamily. D49 sub-subfamily. In terms of assembly, homodimer. The cofactor is Ca(2+). In terms of tissue distribution, expressed by the venom gland.

It localises to the secreted. It catalyses the reaction a 1,2-diacyl-sn-glycero-3-phosphocholine + H2O = a 1-acyl-sn-glycero-3-phosphocholine + a fatty acid + H(+). Functionally, PLA2 catalyzes the calcium-dependent hydrolysis of the 2-acyl groups in 3-sn-phosphoglycerides. The chain is Acidic phospholipase A2 from Crotalus atrox (Western diamondback rattlesnake).